Consider the following 134-residue polypeptide: Ribosome-binding factor A (134 aa).

It belongs to the RbfA family. Monomer. Binds 30S ribosomal subunits, but not 50S ribosomal subunits or 70S ribosomes.

The protein localises to the cytoplasm. Its function is as follows. One of several proteins that assist in the late maturation steps of the functional core of the 30S ribosomal subunit. Associates with free 30S ribosomal subunits (but not with 30S subunits that are part of 70S ribosomes or polysomes). Required for efficient processing of 16S rRNA. May interact with the 5'-terminal helix region of 16S rRNA. This chain is Ribosome-binding factor A, found in Bartonella bacilliformis (strain ATCC 35685 / KC583 / Herrer 020/F12,63).